The primary structure comprises 451 residues: MDRRYFGTDGIRGRVGRTPMTPDFALRLGWAAGRVLAPRGNGLVIIGKDTRVSGYMFESALEAGLSAAGTDIRLLGPMPTPAVAYLTRTFRASAGIVISASHNPFYDNGFKFFSAQGTKLPDEVELAIEAELEKPIETVDSADIGKAERVVDAAGRYIEFCKSTIPNGTAFHDLKLVVDCAHGATYAVAPSVFEELGAEVVAIGAEPDGFNINEKAGSLHPENLRAAVLAQRADAGIALDGDGDRLVLVDEQGEVLDGDEALCIIALARAGEGALGGGVVGTQMSNLGLELALKAQGIAFERAAVGDRYVMEMLQQRGWLLGGESSGHILCLDRTSTGDGIVSALQVLAIMQATGRPLSELRKVMAKFPQTLLNVPLNGGVARDALLSAKAVKEAVRAAEGALGGEGRVLLRPSGTEPLMRVMVEGRERRQVEQIAREIAEAVRSVADHAG.

The Phosphoserine intermediate role is filled by Ser-101. Residues Ser-101, Asp-240, Asp-242, and Asp-244 each coordinate Mg(2+). Ser-101 carries the post-translational modification Phosphoserine.

The protein belongs to the phosphohexose mutase family. Mg(2+) is required as a cofactor. Activated by phosphorylation.

The catalysed reaction is alpha-D-glucosamine 1-phosphate = D-glucosamine 6-phosphate. Functionally, catalyzes the conversion of glucosamine-6-phosphate to glucosamine-1-phosphate. The chain is Phosphoglucosamine mutase from Thioalkalivibrio sulfidiphilus (strain HL-EbGR7).